A 208-amino-acid chain; its full sequence is Protein IncB (208 aa).

This protein is thought to be cis acting and to contain the putative attachment site on the DNA for the cellular partition apparatus. The polypeptide is Protein IncB (incB) (Escherichia coli).